Consider the following 412-residue polypeptide: Maintenance of mitochondrial morphology protein 1 (412 aa).

The Lumenal portion of the chain corresponds to 1–19 (MAQDVCPTRSEPSLSFLQG). The chain crosses the membrane as a helical span at residues 20–40 (LILGQLSVVLLIAAFIKFFIF). The Cytoplasmic portion of the chain corresponds to 41–412 (GEAPSAEETA…GSLPGIDMPT (372 aa)). One can recognise an SMP-LTD domain in the interval 121–337 (QPESLDWFNV…EPRFQEIELP (217 aa)). Basic and acidic residues predominate over residues 372–384 (ARQELDTETDGLR). Positions 372–412 (ARQELDTETDGLRYRRRPVGDDTYSVSGSMPGSLPGIDMPT) are disordered.

It belongs to the MMM1 family. In terms of assembly, homodimer. Component of the ER-mitochondria encounter structure (ERMES) or MDM complex, composed of MMM1, MDM10, MDM12 and MDM34. An MMM1 homodimer associates with one molecule of MDM12 on each side in a pairwise head-to-tail manner, and the SMP-LTD domains of MMM1 and MDM12 generate a continuous hydrophobic tunnel for phospholipid trafficking.

It localises to the endoplasmic reticulum membrane. In terms of biological role, component of the ERMES/MDM complex, which serves as a molecular tether to connect the endoplasmic reticulum (ER) and mitochondria. Components of this complex are involved in the control of mitochondrial shape and protein biogenesis, and function in nonvesicular lipid trafficking between the ER and mitochondria. The MDM12-MMM1 subcomplex functions in the major beta-barrel assembly pathway that is responsible for biogenesis of all outer membrane beta-barrel proteins, and acts in a late step after the SAM complex. The MDM10-MDM12-MMM1 subcomplex further acts in the TOM40-specific pathway after the action of the MDM12-MMM1 complex. Essential for establishing and maintaining the structure of mitochondria and maintenance of mtDNA nucleoids. In Podospora anserina (strain S / ATCC MYA-4624 / DSM 980 / FGSC 10383) (Pleurage anserina), this protein is Maintenance of mitochondrial morphology protein 1.